The primary structure comprises 157 residues: Large ribosomal subunit protein eL24 (157 aa).

The segment at 94 to 157 (RNQKPEVRKA…ISAPRVGGKR (64 aa)) is disordered. Basic and acidic residues predominate over residues 96–117 (QKPEVRKAQREQAIRAAKEAKK). Low complexity predominate over residues 123 to 140 (KKPAAPSAKASTKTAQKP).

This sequence belongs to the eukaryotic ribosomal protein eL24 family. In terms of assembly, component of the large ribosomal subunit.

The protein resides in the cytoplasm. Component of the large ribosomal subunit. The ribosome is a large ribonucleoprotein complex responsible for the synthesis of proteins in the cell. The polypeptide is Large ribosomal subunit protein eL24 (rpl24) (Pagrus major (Red sea bream)).